Reading from the N-terminus, the 719-residue chain is NF-kappa-B inhibitor zeta (719 aa).

Low complexity predominate over residues 46 to 81 (GACDGGCSASGPSAPGSPGSDSSDFSSASSVSSCGA). The segment at 46–97 (GACDGGCSASGPSAPGSPGSDSSDFSSASSVSSCGAVESRPRGGARAERLQV) is disordered. The span at 84-97 (SRPRGGARAERLQV) shows a compositional bias: basic and acidic residues. Residues 108 to 130 (RGPFQGVRVKNSVKELLLHIRSH) enclose the OCA domain. The short motif at 164 to 179 (KRKGSDSLSDGPACKR) is the Nuclear localization signal element. 2 disordered regions span residues 188–210 (LTPP…ESKQ) and 289–343 (YSPQ…FAPL). Over residues 201-210 (EDVHHNESKQ) the composition is skewed to basic and acidic residues. The tract at residues 322–394 (SYEPHLFGRE…LARPDASSTP (73 aa)) is required for transcriptional activity. The segment at 405–719 (GGNPMSTTQL…KSIQQRAPPY (315 aa)) is interaction with NFKB1/p50. ANK repeat units lie at residues 444-473 (DGDT…ALHM), 480-509 (NGQS…QVNT), 513-542 (WGRT…GSNQ), 552-581 (DGLT…HSPE), 583-608 (QELL…AVEA), 613-642 (SGRT…CLSF), and 649-682 (NGNT…DPST).

In terms of assembly, interacts with NFKB1/p50. Interacts with RELA. Interacts with AKIRIN2.

It is found in the nucleus. Functionally, involved in regulation of NF-kappa-B transcription factor complexes. Inhibits NF-kappa-B activity without affecting its nuclear translocation upon stimulation. Inhibits DNA-binding of RELA and NFKB1/p50, and of the NF-kappa-B p65-p50 heterodimer and the NF-kappa-B p50-p50 homodimer. Also seems to activate NF-kappa-B-mediated transcription. In vitro, upon association with NFKB1/p50 has transcriptional activation activity and, together with NFKB1/p50 and RELA, is recruited to LCN2 promoters. Promotes transcription of LCN2 and DEFB4. Is recruited to IL-6 promoters and activates IL-6 but decreases TNF-alpha production in response to LPS. Seems to be involved in the induction of inflammatory genes activated through TLR/IL-1 receptor signaling. Involved in the induction of T helper 17 cells (Th17) differentiation upon recognition of antigen by T cell antigen receptor (TCR). In Bos taurus (Bovine), this protein is NF-kappa-B inhibitor zeta (NFKBIZ).